Consider the following 371-residue polypeptide: Chaperone protein DnaJ (371 aa).

Positions 5–69 (DYYEVLGLSK…QKRAQYDQFG (65 aa)) constitute a J domain. A CR-type zinc finger spans residues 133–215 (GKELNVEIPV…CHGSGKVRKR (83 aa)). Cys146, Cys149, Cys163, Cys166, Cys189, Cys192, Cys203, and Cys206 together coordinate Zn(2+). CXXCXGXG motif repeat units lie at residues 146–153 (CDTCKGSG), 163–170 (CKHCSGSG), 189–196 (CGHCSGTG), and 203–210 (CTTCHGSG).

Belongs to the DnaJ family. Homodimer. Requires Zn(2+) as cofactor.

Its subcellular location is the cytoplasm. Functionally, participates actively in the response to hyperosmotic and heat shock by preventing the aggregation of stress-denatured proteins and by disaggregating proteins, also in an autonomous, DnaK-independent fashion. Unfolded proteins bind initially to DnaJ; upon interaction with the DnaJ-bound protein, DnaK hydrolyzes its bound ATP, resulting in the formation of a stable complex. GrpE releases ADP from DnaK; ATP binding to DnaK triggers the release of the substrate protein, thus completing the reaction cycle. Several rounds of ATP-dependent interactions between DnaJ, DnaK and GrpE are required for fully efficient folding. Also involved, together with DnaK and GrpE, in the DNA replication of plasmids through activation of initiation proteins. The chain is Chaperone protein DnaJ from Bacillus cereus (strain G9842).